The following is a 438-amino-acid chain: SPbeta prophage-derived uncharacterized protein YopA (438 aa).

The chain crosses the membrane as a helical span at residues leucine 391 to tyrosine 411.

Its subcellular location is the cell membrane. This chain is SPbeta prophage-derived uncharacterized protein YopA (yopA), found in Bacillus subtilis (strain 168).